A 159-amino-acid chain; its full sequence is Transcriptional repressor NrdR (159 aa).

The segment at Met1 to Asn22 is disordered. Residues Cys3–Cys34 fold into a zinc finger. Residues Thr11–Asn22 show a composition bias toward basic and acidic residues. Residues Leu49 to Asp139 enclose the ATP-cone domain.

The protein belongs to the NrdR family. The cofactor is Zn(2+).

Functionally, negatively regulates transcription of bacterial ribonucleotide reductase nrd genes and operons by binding to NrdR-boxes. The sequence is that of Transcriptional repressor NrdR from Agrobacterium fabrum (strain C58 / ATCC 33970) (Agrobacterium tumefaciens (strain C58)).